The sequence spans 1029 residues: MPLSFEGTFKAKRNVNLGGKRVSNDRAQLLRKAAMERKNREEERKAENNSVAVQSLSRGFLARRKFKQDFRERWIYKYTKSGRTSIRFNTLEDIKCSISLLVLFAEPDIDLPFVSQVAHNILVWLENLIPLSNGMDDTPKSHLKVKILKVQETLSNSNDSWLWQRFSSLLLNCLVSSINSHRIEGTDTSAETSLLHCLAYVAPYLKSSELSTYYDSVMTFYAQIYPKQNMTNLEDIMSLSLLTPVSSKTDENANSSSAFLFHVLASDCFSSIENCIPPDLIIDKVFSSSLQLSEEACISSLLNLGMIKVFSLAGNCLHLLHTEYKNSSLWKFCSYILDALYVFSGESVNSRIQVVSDVDDDEDDENAFSQNYYSHLQMVAKHFSKNYANQSGIVQRSFAECISSTFITKAFKLVSSNTLQAMSHFYATMIKLFPSNRTSILMYISLVETNEGSLTRSFSRFSWDMFSESPVYQLFHKKFDVQNVLKNDSGYWFQLQLLIDVYSRMLFTMIDDEFHNDKQNPLYPVMAEFCTVLKNLVLGLYWDVQAAKDVDCKSVVDISQLRVSSTSLLQQLYRINSRKQFLPEDFFLMSEYFNLNEFEANALQESELASHAEAEINITYKFDNFSESRPRLNILNNCSFFLPFHFRIHLLQQLLLLDKQANGYAQPFGHLKHAVIRRNRIFDDGFDAFYNFGKLLKGPIRITFVDEHGVVEEGIDGGGLTKEFLTSICKTVFDINYGLFSETKAHLLYPNTHAYAQDVERLRCYEFLGMLIGKCIYEGIQIDAAFASFFVAKWLGHPSYFDDLTSLDPNLYEGLVFLKNYDGDVENDMALNFTVVHEEFGVRNVIDLIPNGSNISVTNENRLQYIHLVSNYYLNARLSRQCRAFTNGFTQIIDPHWLAMFHESEIQILVGGDPVPIDIDDLRRHTVYAGGYEPNSPTIVLFWEVLREFEEEDKRSFVKFVTSVARPPILGFKALMPSFCIRVNGEDETRLPTASTCVNLLKLPMYSTKQTLRDKLLTAVRSGVGFGFS.

The 30-residue stretch at 46 to 75 (AENNSVAVQSLSRGFLARRKFKQDFRERWI) folds into the IQ domain. Residues 692–1029 (FGKLLKGPIR…VRSGVGFGFS (338 aa)) enclose the HECT domain. Residue cysteine 997 is the Glycyl thioester intermediate of the active site.

It localises to the cytoplasm. It is found in the nucleus. The enzyme catalyses S-ubiquitinyl-[E2 ubiquitin-conjugating enzyme]-L-cysteine + [acceptor protein]-L-lysine = [E2 ubiquitin-conjugating enzyme]-L-cysteine + N(6)-ubiquitinyl-[acceptor protein]-L-lysine.. Functionally, probable E3 ubiquitin-protein ligase which mediates ubiquitination and subsequent proteasomal degradation of target proteins. The sequence is that of Probable E3 ubiquitin protein ligase C167.07c from Schizosaccharomyces pombe (strain 972 / ATCC 24843) (Fission yeast).